An 83-amino-acid polypeptide reads, in one-letter code: Hainantoxin-III 4 (83 aa).

Residues 1–21 form the signal peptide; sequence MKASMYLALAGLVLLFVVGYA. The propeptide occupies 22 to 48; sequence SESEEKEFPRELLSKIFAVDDFKGKER. 3 disulfides stabilise this stretch: C50–C65, C57–C70, and C64–C77. Residue L81 is modified to Leucine amide.

Belongs to the neurotoxin 10 (Hwtx-1) family. 15 (Hntx-3) subfamily. Monomer. Expressed by the venom gland.

The protein localises to the secreted. Its function is as follows. Selective antagonist of neuronal tetrodotoxin (TTX)-sensitive voltage-gated sodium channels (IC(50)=1270 nM on Nav1.1/SCN1A, 270 nM on Nav1.2/SCN2A, 491 nM on Nav1.3/SCN3A and 232 nM on Nav1.7/SCN9A). This toxin suppress Nav1.7 current amplitude without significantly altering the activation, inactivation, and repriming kinetics. Short extreme depolarizations partially activate the toxin-bound channel, indicating voltage-dependent inhibition of this toxin. This toxin increases the deactivation of the Nav1.7 current after extreme depolarizations. The toxin-Nav1.7 complex is gradually dissociated upon prolonged strong depolarizations in a voltage-dependent manner, and the unbound toxin rebinds to Nav1.7 after a long repolarization. Moreover, analysis of chimeric channels showed that the DIIS3-S4 linker is critical for toxin binding to Nav1.7. These data are consistent with this toxin interacting with Nav1.7 site 4 and trapping the domain II voltage sensor in the closed state. The protein is Hainantoxin-III 4 of Cyriopagopus hainanus (Chinese bird spider).